The primary structure comprises 696 residues: MAQAGPTPQQAIARLRAEIEQHNIRYYVHDDPSVPDAEYDALMRDLQALEAEHPELVTPDSPTQRVGAAPLAEFGSVRHAVPMLSLGNAFDEEDVRAFDKRVADTLRGAGLLGLDQQVEYFCELKLDGLAISLRYEEGRLAQAATRGDGQTGEDVTANIRTIKGVPLRLHGAPRVLEVRGEVLMNRAEFERLNRTQAARGEKVFVNPRNAAAGSLRQLDPRITAQRPLRFFAYSWGEVHGLPEGMPTRFDEPAPGVRVASTLPRDTHGGMLDWLAELGLPVNLRHNHRERGADGLLAFYERIGKLRADLPYDIDGVVYKVDALPSQRVLGFVARAPRFALAHKFPAEEAVTQLLGIEVQVGRTGAITPVARLAPVFVGGVTVTNATLHNEDEIRRKDVRIGDTVIVRRAGDVIPEVVGPVLEKRPADAREFVMLTACPICGSAIERPEGEAIARCTGGLFCAAQRKQTLLHAAGRKALDIEGLGEKLIDQLVDADRVKSLADIYSLTAFELAALERMGKKSAENLVAAIDQARRPALGRLLFALGIRHVGETTARDVARHFGSMERIMDASEEALLAVPDVGGVVAGSIRRFFAEPHNREIVEQLTQQGVHPQAEAEPEGTSLAGKTFVLTGTMPNWTRDEATRRILAAGGKVSGSVSKKTAYLVTGEDAGSKLTKAQELGVPVLDEDGLKALLGL.

NAD(+) contacts are provided by residues 36-40 (DAEYD), 85-86 (SL), and E123. Catalysis depends on K125, which acts as the N6-AMP-lysine intermediate. NAD(+) contacts are provided by R146, E181, K319, and K343. C437, C440, C455, and C461 together coordinate Zn(2+). The 79-residue stretch at 618-696 (PEGTSLAGKT…EDGLKALLGL (79 aa)) folds into the BRCT domain.

This sequence belongs to the NAD-dependent DNA ligase family. LigA subfamily. The cofactor is Mg(2+). Mn(2+) serves as cofactor.

It catalyses the reaction NAD(+) + (deoxyribonucleotide)n-3'-hydroxyl + 5'-phospho-(deoxyribonucleotide)m = (deoxyribonucleotide)n+m + AMP + beta-nicotinamide D-nucleotide.. DNA ligase that catalyzes the formation of phosphodiester linkages between 5'-phosphoryl and 3'-hydroxyl groups in double-stranded DNA using NAD as a coenzyme and as the energy source for the reaction. It is essential for DNA replication and repair of damaged DNA. This Bordetella bronchiseptica (strain ATCC BAA-588 / NCTC 13252 / RB50) (Alcaligenes bronchisepticus) protein is DNA ligase.